Here is a 334-residue protein sequence, read N- to C-terminus: Glycerol-3-phosphate dehydrogenase [NAD(P)+] (334 aa).

NADPH is bound by residues tryptophan 14, arginine 34, and lysine 107. Residues lysine 107 and glycine 135 each coordinate sn-glycerol 3-phosphate. Alanine 139 lines the NADPH pocket. Positions 190, 243, 253, 254, and 255 each coordinate sn-glycerol 3-phosphate. The Proton acceptor role is filled by lysine 190. Arginine 254 is an NADPH binding site. Residues valine 272 and glutamate 273 each coordinate NADPH.

It belongs to the NAD-dependent glycerol-3-phosphate dehydrogenase family.

The protein resides in the cytoplasm. It catalyses the reaction sn-glycerol 3-phosphate + NAD(+) = dihydroxyacetone phosphate + NADH + H(+). The enzyme catalyses sn-glycerol 3-phosphate + NADP(+) = dihydroxyacetone phosphate + NADPH + H(+). Its pathway is membrane lipid metabolism; glycerophospholipid metabolism. In terms of biological role, catalyzes the reduction of the glycolytic intermediate dihydroxyacetone phosphate (DHAP) to sn-glycerol 3-phosphate (G3P), the key precursor for phospholipid synthesis. In Neorickettsia sennetsu (strain ATCC VR-367 / Miyayama) (Ehrlichia sennetsu), this protein is Glycerol-3-phosphate dehydrogenase [NAD(P)+].